We begin with the raw amino-acid sequence, 492 residues long: Glutamyl-tRNA(Gln) amidotransferase subunit A (492 aa).

Active-site charge relay system residues include Lys-78 and Ser-158. The Acyl-ester intermediate role is filled by Ser-182.

This sequence belongs to the amidase family. GatA subfamily. Heterotrimer of A, B and C subunits.

It catalyses the reaction L-glutamyl-tRNA(Gln) + L-glutamine + ATP + H2O = L-glutaminyl-tRNA(Gln) + L-glutamate + ADP + phosphate + H(+). Its function is as follows. Allows the formation of correctly charged Gln-tRNA(Gln) through the transamidation of misacylated Glu-tRNA(Gln) in organisms which lack glutaminyl-tRNA synthetase. The reaction takes place in the presence of glutamine and ATP through an activated gamma-phospho-Glu-tRNA(Gln). This Rhodopseudomonas palustris (strain BisB5) protein is Glutamyl-tRNA(Gln) amidotransferase subunit A.